The chain runs to 506 residues: Pleckstrin homology domain-containing family D member 1 (506 aa).

Residues 28–136 (KVQLYGVLWK…WLEMLQESGK (109 aa)) form the PH domain. A coiled-coil region spans residues 146–391 (EAMIKSLEAQ…KVRNKEKEER (246 aa)). Arginine 503 is modified (omega-N-methylarginine).

This sequence belongs to the PLEKHD1 family.

In Homo sapiens (Human), this protein is Pleckstrin homology domain-containing family D member 1 (PLEKHD1).